A 121-amino-acid polypeptide reads, in one-letter code: uncharacterized protein (121 aa).

A signal peptide spans 1 to 23 (MNFSTVFQAIIAVLGLTTVTALA). Asn68 and Asn84 each carry an N-linked (GlcNAc...) asparagine glycan.

In terms of processing, N-glycosylated.

This is an uncharacterized protein from Saccharomyces cerevisiae (strain ATCC 204508 / S288c) (Baker's yeast).